The primary structure comprises 185 residues: Large ribosomal subunit protein uL22 (185 aa).

The protein belongs to the universal ribosomal protein uL22 family. Part of the 50S ribosomal subunit.

This protein binds specifically to 23S rRNA. It makes multiple contacts with different domains of the 23S rRNA in the assembled 50S subunit and ribosome. Functionally, the globular domain of the protein is located near the polypeptide exit tunnel on the outside of the subunit, while an extended beta-hairpin is found that lines the wall of the exit tunnel in the center of the 70S ribosome. The sequence is that of Large ribosomal subunit protein uL22 from Caldivirga maquilingensis (strain ATCC 700844 / DSM 13496 / JCM 10307 / IC-167).